Reading from the N-terminus, the 274-residue chain is Ribosomal RNA small subunit methyltransferase A (274 aa).

S-adenosyl-L-methionine is bound by residues histidine 15, leucine 17, glycine 42, glutamate 64, aspartate 89, and asparagine 108.

It belongs to the class I-like SAM-binding methyltransferase superfamily. rRNA adenine N(6)-methyltransferase family. RsmA subfamily.

Its subcellular location is the cytoplasm. The catalysed reaction is adenosine(1518)/adenosine(1519) in 16S rRNA + 4 S-adenosyl-L-methionine = N(6)-dimethyladenosine(1518)/N(6)-dimethyladenosine(1519) in 16S rRNA + 4 S-adenosyl-L-homocysteine + 4 H(+). Specifically dimethylates two adjacent adenosines (A1518 and A1519) in the loop of a conserved hairpin near the 3'-end of 16S rRNA in the 30S particle. May play a critical role in biogenesis of 30S subunits. The polypeptide is Ribosomal RNA small subunit methyltransferase A (Prochlorococcus marinus (strain MIT 9301)).